Here is a 512-residue protein sequence, read N- to C-terminus: MAIERELVLVVDFGGQYNQLIARRVREHNVYCEIIPYTTSVEDIKKKNPKAIIFTGGPNSVYGEGTPRVEKEIFELGVPVLGICYGHQLTAYTLGGKVESPDIREYGKTEVKIDNKSPLFDGIKEADQSWMSHTDYVSEIPEGFKIIATTDQCPVAAMANEEKKIYGVQFHPEVEHTLFGQKMLGNFLFKVAGLKADWSMASFAEEKIKAIKELVGDKKVLCALSGGVDSSVAAVLVHKAIGKQLTCVFVDHGLLRKDEGDQVEAIFKKQFDMNLIRVNAGERFLGKLKGVSDPETKRKIIGEEFIRVFEEEAGKLGQIDFLVQGTIYPDVVESGTNTSATIKSHHNVGGLPEDMQFSLIEPLRELFKDEVRAVGEELGIPHKLVWRQPFPGPGLAIRVLGEITEEKLEITREADAIFREEIALAGLEEKIWQYFACLPNIQSVGVMGDERTYCHTIALRAVTSSDAMTSDWARIPYEVLDKVSRRIVNEVKGVNRIVYDVTSKPPATIEWE.

Residues 7-197 (LVLVVDFGGQ…LFKVAGLKAD (191 aa)) form the Glutamine amidotransferase type-1 domain. Residue cysteine 84 is the Nucleophile of the active site. Active-site residues include histidine 171 and glutamate 173. The 190-residue stretch at 198–387 (WSMASFAEEK…LGIPHKLVWR (190 aa)) folds into the GMPS ATP-PPase domain. ATP is bound at residue 225–231 (SGGVDSS).

Homodimer.

It catalyses the reaction XMP + L-glutamine + ATP + H2O = GMP + L-glutamate + AMP + diphosphate + 2 H(+). It participates in purine metabolism; GMP biosynthesis; GMP from XMP (L-Gln route): step 1/1. Its function is as follows. Catalyzes the synthesis of GMP from XMP. The protein is GMP synthase [glutamine-hydrolyzing] of Clostridium novyi (strain NT).